A 205-amino-acid chain; its full sequence is Holliday junction branch migration complex subunit RuvA (205 aa).

Residues 1–62 (MFEYVTGYVE…EDIMALYGFK (62 aa)) form a domain I region. The segment at 63 to 141 (TREERLLFTK…DVVPDVFVDL (79 aa)) is domain II. Residues 142-152 (FSDEERFDEKK) form a flexible linker region. The tract at residues 153–205 (GSSTELDEALEALRALGYAEREINRVLPELLKESLTTDQYIKKALSLLLNGKR) is domain III.

This sequence belongs to the RuvA family. Homotetramer. Forms an RuvA(8)-RuvB(12)-Holliday junction (HJ) complex. HJ DNA is sandwiched between 2 RuvA tetramers; dsDNA enters through RuvA and exits via RuvB. An RuvB hexamer assembles on each DNA strand where it exits the tetramer. Each RuvB hexamer is contacted by two RuvA subunits (via domain III) on 2 adjacent RuvB subunits; this complex drives branch migration. In the full resolvosome a probable DNA-RuvA(4)-RuvB(12)-RuvC(2) complex forms which resolves the HJ.

Its subcellular location is the cytoplasm. Functionally, the RuvA-RuvB-RuvC complex processes Holliday junction (HJ) DNA during genetic recombination and DNA repair, while the RuvA-RuvB complex plays an important role in the rescue of blocked DNA replication forks via replication fork reversal (RFR). RuvA specifically binds to HJ cruciform DNA, conferring on it an open structure. The RuvB hexamer acts as an ATP-dependent pump, pulling dsDNA into and through the RuvAB complex. HJ branch migration allows RuvC to scan DNA until it finds its consensus sequence, where it cleaves and resolves the cruciform DNA. In Bacillus cytotoxicus (strain DSM 22905 / CIP 110041 / 391-98 / NVH 391-98), this protein is Holliday junction branch migration complex subunit RuvA.